Here is a 188-residue protein sequence, read N- to C-terminus: Elongation factor P (188 aa).

Belongs to the elongation factor P family.

The protein localises to the cytoplasm. It participates in protein biosynthesis; polypeptide chain elongation. Its function is as follows. Involved in peptide bond synthesis. Stimulates efficient translation and peptide-bond synthesis on native or reconstituted 70S ribosomes in vitro. Probably functions indirectly by altering the affinity of the ribosome for aminoacyl-tRNA, thus increasing their reactivity as acceptors for peptidyl transferase. The sequence is that of Elongation factor P from Rhodopseudomonas palustris (strain BisB5).